Here is a 149-residue protein sequence, read N- to C-terminus: Large ribosomal subunit protein uL13 (149 aa).

This sequence belongs to the universal ribosomal protein uL13 family. In terms of assembly, part of the 50S ribosomal subunit.

In terms of biological role, this protein is one of the early assembly proteins of the 50S ribosomal subunit, although it is not seen to bind rRNA by itself. It is important during the early stages of 50S assembly. This chain is Large ribosomal subunit protein uL13, found in Prosthecochloris aestuarii (strain DSM 271 / SK 413).